The sequence spans 295 residues: MSNANPYENNNPYAENYEMQEDLNNAPTGHSDGSDDFVAFMNKINSINANLSRYENIINQIDAQHKDLLTQVSEEQEMELRRSLDDYISQATDLQYQLKADIKDAQRDGLHDSNKQAQAENCRQKFLKLIQDYRIIDSNYKEESKEQAKRQYTIIQPEATDEEVEAAINDVNGQQIFSQALLNANRRGEAKTALAEVQARHQELLKLEKTMAELTQLFNDMEELVIEQQENVDVIDKNVEDAQQDVEQGVGHTNKAVKSARKARKNKIRCLIICFIIFAIVVVVVVVPSVVETRK.

At 1-269 (MSNANPYENN…ARKARKNKIR (269 aa)) the chain is on the cytoplasmic side. Phosphoserine is present on residues Ser31 and Ser34. Positions 39–100 (AFMNKINSIN…ATDLQYQLKA (62 aa)) form a coiled coil. One can recognise a t-SNARE coiled-coil homology domain in the interval 194 to 256 (LAEVQARHQE…EQGVGHTNKA (63 aa)). The helical; Anchor for type IV membrane protein transmembrane segment at 270–291 (CLIICFIIFAIVVVVVVVPSVV) threads the bilayer. Over 292 to 295 (ETRK) the chain is Extracellular.

The protein belongs to the syntaxin family.

It localises to the membrane. Its function is as follows. Required for vesicle fusion with the plasma membrane. This is Protein SSO2 (SSO2) from Saccharomyces cerevisiae (strain ATCC 204508 / S288c) (Baker's yeast).